The chain runs to 340 residues: Protein arginine N-methyltransferase 1 (340 aa).

The 296-residue stretch at 16–311 (KDYYFDSYSH…TCKPAEGNHR (296 aa)) folds into the SAM-dependent MTase PRMT-type domain. Residue Y19 is modified to Phosphotyrosine. Residues H29, R38, G62, D84, and E113 each coordinate S-adenosyl-L-methionine. Residues E128 and E137 contribute to the active site. S176 is subject to Phosphoserine.

This sequence belongs to the class I-like SAM-binding methyltransferase superfamily. Protein arginine N-methyltransferase family. As to quaternary structure, interacts with pab2.

It localises to the nucleus. The catalysed reaction is L-arginyl-[protein] + S-adenosyl-L-methionine = N(omega)-methyl-L-arginyl-[protein] + S-adenosyl-L-homocysteine + H(+). It carries out the reaction L-arginyl-[protein] + 2 S-adenosyl-L-methionine = N(omega),N(omega)-dimethyl-L-arginyl-[protein] + 2 S-adenosyl-L-homocysteine + 2 H(+). Its function is as follows. S-adenosyl-L-methionine-dependent protein-arginine N-methyltransferase that catalyzes both the mono- and asymmetric (type I) dimethylation of the guanidino nitrogens of arginine residues in target proteins. Asymmetrically dimethylates the polyadenylate-binding protein pab2, modulating pab2 oligomerization. This chain is Protein arginine N-methyltransferase 1, found in Schizosaccharomyces pombe (strain 972 / ATCC 24843) (Fission yeast).